We begin with the raw amino-acid sequence, 217 residues long: 3-dehydroquinate dehydratase (217 aa).

3-dehydroquinate-binding positions include 26–28 and Arg59; that span reads EFR. The active-site Proton donor/acceptor is the His114. The active-site Schiff-base intermediate with substrate is Lys140. Positions 178 and 201 each coordinate 3-dehydroquinate.

It belongs to the type-I 3-dehydroquinase family. Homodimer.

It catalyses the reaction 3-dehydroquinate = 3-dehydroshikimate + H2O. Its pathway is metabolic intermediate biosynthesis; chorismate biosynthesis; chorismate from D-erythrose 4-phosphate and phosphoenolpyruvate: step 3/7. Its function is as follows. Involved in the third step of the chorismate pathway, which leads to the biosynthesis of aromatic amino acids. Catalyzes the cis-dehydration of 3-dehydroquinate (DHQ) and introduces the first double bond of the aromatic ring to yield 3-dehydroshikimate. This Hydrogenobaculum sp. (strain Y04AAS1) protein is 3-dehydroquinate dehydratase.